The sequence spans 602 residues: Proteasome-associated ATPase (602 aa).

Residues 1 to 17 (MSGPRSGSGSDGSTGRP) show a composition bias toward low complexity. The segment at 1-31 (MSGPRSGSGSDGSTGRPGDAESRRSAYEKET) is disordered. A compositionally biased stretch (basic and acidic residues) spans 18 to 31 (GDAESRRSAYEKET). A coiled-coil region spans residues 19 to 106 (DAESRRSAYE…LKEEVDRLAQ (88 aa)). 289 to 294 (GCGKTL) is an ATP binding site. The segment at 601–602 (YL) is docks into pockets in the proteasome alpha-ring.

It belongs to the AAA ATPase family. In terms of assembly, homohexamer. Assembles into a hexameric ring structure that caps the 20S proteasome core. Strongly interacts with the prokaryotic ubiquitin-like protein Pup through a hydrophobic interface; the interacting region of ARC lies in its N-terminal coiled-coil domain. There is one Pup binding site per ARC hexamer ring. Upon ATP-binding, the C-terminus of ARC interacts with the alpha-rings of the proteasome core, possibly by binding to the intersubunit pockets.

It participates in protein degradation; proteasomal Pup-dependent pathway. ATPase which is responsible for recognizing, binding, unfolding and translocation of pupylated proteins into the bacterial 20S proteasome core particle. May be essential for opening the gate of the 20S proteasome via an interaction with its C-terminus, thereby allowing substrate entry and access to the site of proteolysis. Thus, the C-termini of the proteasomal ATPase may function like a 'key in a lock' to induce gate opening and therefore regulate proteolysis. The sequence is that of Proteasome-associated ATPase from Frankia casuarinae (strain DSM 45818 / CECT 9043 / HFP020203 / CcI3).